We begin with the raw amino-acid sequence, 92 residues long: UPF0250 protein PD_0532 (92 aa).

This sequence belongs to the UPF0250 family.

This Xylella fastidiosa (strain Temecula1 / ATCC 700964) protein is UPF0250 protein PD_0532.